A 139-amino-acid polypeptide reads, in one-letter code: uncharacterized protein (139 aa).

This is an uncharacterized protein from Galliformes (FAdV-1).